We begin with the raw amino-acid sequence, 424 residues long: CinA-like protein (424 aa).

This sequence belongs to the CinA family.

The sequence is that of CinA-like protein from Shewanella halifaxensis (strain HAW-EB4).